The chain runs to 108 residues: uncharacterized protein (108 aa).

The N-terminal stretch at 1 to 21 is a signal peptide; sequence MFRSLFLAAALMAFTPLAANA.

To E.coli YaaX.

This is an uncharacterized protein from Escherichia coli O157:H7.